The sequence spans 5154 residues: Hydrocephalus-inducing protein (5154 aa).

Residues 409-800 are interaction with KIF9; that stretch reads MILEDSVLDP…VLLSSPSPCG (392 aa). Residues 997–1009 show a composition bias toward basic and acidic residues; that stretch reads RPKEKQSKKEPGK. Disordered stretches follow at residues 997 to 1033, 1966 to 1988, 2193 to 2222, 2383 to 2423, 2521 to 2572, and 2706 to 2762; these read RPKEKQSKKEPGKKGSTSSSRRQSKASQEPTDNGNPV, ENEEEEMNTSDQGTTSTKRTSIS, ADSHFTGSQKQHHQHQSETPQVQISSSPLL, KLQQ…QGAT, HTGT…KAER, and KAQE…DIDQ. The segment covering 1010-1024 has biased composition (low complexity); that stretch reads KGSTSSSRRQSKASQ. The stretch at 1948–1977 forms a coiled coil; it reads EMKKSKEEHMKAKYMENLENEEEEMNTSDQ. Composition is skewed to polar residues over residues 1974–1988 and 2209–2220; these read TSDQGTTSTKRTSIS and SETPQVQISSSP. The stretch at 2308–2444 forms a coiled coil; sequence YVVMKAQEKA…LKMESIERKV (137 aa). 4 stretches are compositionally biased toward basic and acidic residues: residues 2383 to 2398, 2523 to 2535, 2548 to 2572, and 2721 to 2734; these read KLQQELERQKEEDELK, GTDEMSHEADDQR, KDRERERLEKERAEKERLEREKAER, and KLKDKPEQVRETQK. Residues 2543 to 2588 are a coiled coil; it reads GRKGRKDRERERLEKERAEKERLEREKAERERLEKLKALEERSDVE.

As to quaternary structure, interacts with KIF9. In terms of tissue distribution, expressed in brain and testis. Expressed in ciliated epithelial cells lining bronchi and oviduct, and in spermatocytes.

It localises to the cell projection. The protein resides in the cilium. Its subcellular location is the cytoplasm. It is found in the cytoskeleton. The protein localises to the cilium axoneme. It localises to the flagellum. Required for ciliary motility. In Mus musculus (Mouse), this protein is Hydrocephalus-inducing protein (Hydin).